The primary structure comprises 164 residues: Choriogonadotropin subunit beta (164 aa).

Residues 1–20 (MEMLQGLLLCLLLSTGGAWA) form the signal peptide. Disulfide bonds link cysteine 29/cysteine 77, cysteine 43/cysteine 92, cysteine 46/cysteine 130, cysteine 54/cysteine 108, cysteine 58/cysteine 110, and cysteine 113/cysteine 120. Residue asparagine 50 is glycosylated (N-linked (GlcNAc...) asparagine). The disordered stretch occupies residues 133-164 (HTSQDSSSKDPPRNLTSPSQLPEPADAPLVPQ). A glycan (O-linked (GalNAc...) serine) is linked at serine 140. An N-linked (GlcNAc...) asparagine glycan is attached at asparagine 146. An O-linked (GalNAc...) serine glycan is attached at serine 151.

The protein belongs to the glycoprotein hormones subunit beta family. In terms of assembly, heterodimer of a common alpha chain and a unique beta chain which confers biological specificity to thyrotropin, lutropin, follitropin and gonadotropin.

The protein localises to the secreted. Stimulates the ovaries to synthesize the steroids that are essential for the maintenance of pregnancy. The polypeptide is Choriogonadotropin subunit beta (CGB) (Aotus nancymaae (Ma's night monkey)).